The sequence spans 442 residues: MNFFMEKNKDAGHRVTIKIPKTTVNNSLFQEFIKIRKTTKINGFRKGKTPIRVIQEKYGSAIYYDIFKKLMQKFFYEFLKTEKIKIIGSPKFYIHQDEDKKKEYFEYSVIYELYPQFQIKDIKQIKVNKINVEITEEDIKKNIETNKNKKNIWNPVNKAVKSYDRVTINYCIYEKNKKIKKFDKDNISFIVSKNTLIPQLNYKIINHFVNDIIFFKIKFHAFHPEKELQNKDITFKIKIIKIEKKQELESEKSNKKNITEKKTIQTDYQTIKNNLHSQINIITDKYLENQIIQKIVEKNILLLPPLLFQKEIKNLYKQYTKQYQEENSNILEKKYHMSLDSEVKKRLYFQIIIEQIILNNKLFADENNIQKLIKKISSNYKNPMEIIKLYNKNKNLKNTMKNIELERQAMLLLKKSIKIEKQNWNFERFLNYNWASHEELMV.

The PPIase FKBP-type domain occupies 163 to 248 (YDRVTINYCI…IIKIEKKQEL (86 aa)).

It belongs to the FKBP-type PPIase family. Tig subfamily.

The protein resides in the cytoplasm. It catalyses the reaction [protein]-peptidylproline (omega=180) = [protein]-peptidylproline (omega=0). Functionally, involved in protein export. Acts as a chaperone by maintaining the newly synthesized protein in an open conformation. Functions as a peptidyl-prolyl cis-trans isomerase. The sequence is that of Trigger factor from Buchnera aphidicola subsp. Acyrthosiphon pisum (strain Tuc7).